The following is a 527-amino-acid chain: Putative ribose/galactose/methyl galactoside import ATP-binding protein 2 (527 aa).

Positions 1–31 (MFTARVARPMAGDDAPAASSGSTGSSAPPAS) are disordered. A compositionally biased stretch (low complexity) spans 12–31 (GDDAPAASSGSTGSSAPPAS). ABC transporter domains are found at residues 38–274 (LEVR…VGRE) and 284–523 (VPIG…RIMD). 70–77 (GENGAGKS) is a binding site for ATP.

The protein belongs to the ABC transporter superfamily. Carbohydrate importer 2 (CUT2) (TC 3.A.1.2) family.

The protein localises to the cell inner membrane. The catalysed reaction is D-ribose(out) + ATP + H2O = D-ribose(in) + ADP + phosphate + H(+). It carries out the reaction D-galactose(out) + ATP + H2O = D-galactose(in) + ADP + phosphate + H(+). Functionally, part of an ABC transporter complex involved in carbohydrate import. Could be involved in ribose, galactose and/or methyl galactoside import. Responsible for energy coupling to the transport system. This is Putative ribose/galactose/methyl galactoside import ATP-binding protein 2 from Burkholderia lata (strain ATCC 17760 / DSM 23089 / LMG 22485 / NCIMB 9086 / R18194 / 383).